The sequence spans 1864 residues: Nestin (1864 aa).

At Met-1 the chain carries N-acetylmethionine. A head region spans residues 1–7; it reads MEGCVGE. The segment at 8–43 is coil 1A; it reads ESFQMWELNRRLEAYLTRVKTLEEQNQLLSAELGGL. Positions 8 to 314 constitute an IF rod domain; that stretch reads ESFQMWELNR…TLLEAENSRL (307 aa). A linker 1 region spans residues 44–55; it reads RAQSGDASWRAR. Residues 56-151 are coil 1B; that stretch reads ADDELAALRV…ASHEEERAHL (96 aa). The segment at 152–174 is linker 12; it reads NAQAACTPRRPPAPAHASPIRAP. The interval 175–193 is coil 2A; sequence EVEELARRLGEVWRGAVRD. Residues 194 to 196 form a linker 2 region; it reads YQE. The segment at 197-314 is coil 2B; that stretch reads RVAHMESSLG…TLLEAENSRL (118 aa). Ser-312 carries the phosphoserine modification. Residues 315–1864 form a tail region; it reads QTPGRSSQAS…DGDSWSSGED (1550 aa). Thr-316 carries the phosphothreonine modification. Phosphoserine occurs at positions 356 and 359. The residue at position 389 (Thr-389) is a Phosphothreonine. Disordered regions lie at residues 437 to 492, 515 to 625, and 680 to 845; these read GVLP…EEEG, EIQE…MSPE, and KEDQ…LDEN. Over residues 469–480 the composition is skewed to basic and acidic residues; that stretch reads SILEAKDRESSE. A compositionally biased stretch (polar residues) spans 559 to 573; the sequence is KENCNSSIEENSGTV. Phosphoserine is present on residues Ser-565 and Ser-575. 2 stretches are compositionally biased toward basic and acidic residues: residues 575-598 and 609-618; these read SPEK…EKTL and LGEEEPRMED. Phosphoserine is present on residues Ser-623, Ser-688, Ser-731, Ser-775, Ser-841, Ser-862, and Ser-894. Composition is skewed to basic and acidic residues over residues 680–690, 698–732, 742–776, and 786–843; these read KEDQRFPRSPE, PLEK…LKSP, LLEK…LKSP, and LLEK…RSLD. 3 stretches are compositionally biased toward basic and acidic residues: residues 916 to 925, 947 to 965, and 978 to 1012; these read ILGSLEDRNG, QRIV…RSPE, and LEGE…KSLE. Residues 916 to 1113 form a disordered region; it reads ILGSLEDRNG…VKSSETENIE (198 aa). Residues Ser-963, Ser-1010, and Ser-1021 each carry the phosphoserine modification. Residues 1065–1090 are compositionally biased toward basic and acidic residues; sequence EKVDPELPKPLRNDQEVVRSLDKENQ. Ser-1106 and Ser-1127 each carry phosphoserine. 4 disordered regions span residues 1129-1158, 1175-1344, 1375-1722, and 1735-1807; these read DTQE…LGCV, LRSL…DSVE, EAIH…DDGL, and ETVS…GLEQ. A compositionally biased stretch (polar residues) spans 1133-1143; the sequence is PLWSTEVTSET. Residues Ser-1177, Ser-1188, and Ser-1195 each carry the phosphoserine modification. Basic and acidic residues predominate over residues 1204-1213; the sequence is GPEREQHQES. Ser-1216 carries the post-translational modification Phosphoserine. Basic and acidic residues predominate over residues 1254–1273; that stretch reads TEDKAELHLRGQGGEEKAVE. Position 1290 is a phosphoserine (Ser-1290). Basic and acidic residues predominate over residues 1384 to 1405; it reads ESVKAKIDQGLEEPGKEPKEAG. Acidic residues predominate over residues 1429 to 1440; sequence ESGEGWGEEEAS. A compositionally biased stretch (basic and acidic residues) spans 1514-1527; sequence GRVEDEPEFGRGEI. Residues 1532 to 1547 show a composition bias toward acidic residues; it reads QDWEEGREDSEADELG. Residues Ser-1541 and Ser-1565 each carry the phosphoserine modification. Over residues 1612–1621 the composition is skewed to acidic residues; it reads LSSEEFEDLG. Phosphoserine occurs at positions 1656 and 1665. Residues 1658–1680 show a composition bias toward acidic residues; it reads GFADEEESGEEGEEEDADEEEGA. The span at 1703–1712 shows a compositional bias: basic and acidic residues; that stretch reads QRGDLEHESV. 2 stretches are compositionally biased toward low complexity: residues 1713–1722 and 1741–1755; these read GDSGLWDDGL and SAEP…SASL. Residues Ser-1745 and Ser-1747 each carry the phosphoserine modification. Over residues 1788–1797 the composition is skewed to polar residues; sequence QGPNLESEQV. Phosphoserine is present on residues Ser-1837, Ser-1860, and Ser-1861. The tract at residues 1841–1864 is disordered; the sequence is LGPSQPLKFTLSGVDGDSWSSGED.

The protein belongs to the intermediate filament family. In terms of assembly, forms homodimers and homotetramers in vitro. In mixtures with other intermediate filament proteins such as vimentin and alpha-internexin, this protein preferentially forms heterodimers which can assemble to form intermediate filaments if nestin does not exceed 25%. Interacts with FHOD3. Post-translationally, constitutively phosphorylated. This increases during mitosis when the cytoplasmic intermediate filament network is reorganized.

In terms of biological role, required for brain and eye development. Promotes the disassembly of phosphorylated vimentin intermediate filaments (IF) during mitosis and may play a role in the trafficking and distribution of IF proteins and other cellular factors to daughter cells during progenitor cell division. Required for survival, renewal and mitogen-stimulated proliferation of neural progenitor cells. The sequence is that of Nestin (Nes) from Mus musculus (Mouse).